Here is a 172-residue protein sequence, read N- to C-terminus: MVDKRESYTKEDLLASGRGELFGAKGPQLPAPNMLMMDRVVKMTETGGNFDKGYVEAELDINPDLWFFGCHFIGDPVMPGCLGLDAMWQLVGFYLGWLGGEGKGRALGVGEVKFTGQVLPTAKKVTYRIHFKRIVNRRLIMGLADGEVLVDGRLIYTASDLKVGLFQDTSAF.

Residue histidine 71 is part of the active site.

Belongs to the thioester dehydratase family. FabA subfamily. In terms of assembly, homodimer.

The protein resides in the cytoplasm. The enzyme catalyses a (3R)-hydroxyacyl-[ACP] = a (2E)-enoyl-[ACP] + H2O. It catalyses the reaction (3R)-hydroxydecanoyl-[ACP] = (2E)-decenoyl-[ACP] + H2O. It carries out the reaction (2E)-decenoyl-[ACP] = (3Z)-decenoyl-[ACP]. It participates in lipid metabolism; fatty acid biosynthesis. In terms of biological role, necessary for the introduction of cis unsaturation into fatty acids. Catalyzes the dehydration of (3R)-3-hydroxydecanoyl-ACP to E-(2)-decenoyl-ACP and then its isomerization to Z-(3)-decenoyl-ACP. Can catalyze the dehydratase reaction for beta-hydroxyacyl-ACPs with saturated chain lengths up to 16:0, being most active on intermediate chain length. In Escherichia coli O139:H28 (strain E24377A / ETEC), this protein is 3-hydroxydecanoyl-[acyl-carrier-protein] dehydratase.